Here is a 493-residue protein sequence, read N- to C-terminus: Occludin (493 aa).

Residues 1 to 47 (MYSRPSNYAPSKDVYGGEMRSQPAYSYYPEEEIQHFYRWSSPPGIIK) lie on the Cytoplasmic side of the membrane. The 210-residue stretch at 41–250 (SPPGIIKIMS…IIFFAVKTRK (210 aa)) folds into the MARVEL domain. A helical transmembrane segment spans residues 48–70 (IMSILIVVMCVGIFACVASTLPW). At 71 to 116 (DLDITGQSMGYGMGSGSYSGGYTGYGFGGSQMGLGFAYGGNYTDPR) the chain is on the extracellular side. Residues 117–141 (AAKGFILAMAAFCFIIGLVIFVMLV) form a helical membrane-spanning segment. The Cytoplasmic segment spans residues 142 to 151 (TRTPLSTSRK). The chain crosses the membrane as a helical span at residues 152–176 (FYLIVIIVSAIIGGLVFIATIVYTV). Residues 177-224 (GVNPVAQASGSAFYTQIVSICNQFYSPVQTGVFVNQYLYHYCVVEPQE) lie on the Extracellular side of the membrane. A disulfide bond links C197 and C218. Residues 225 to 246 (AIAIVLGFLIVVAFAIIIFFAV) traverse the membrane as a helical segment. Topologically, residues 247 to 493 (KTRKKINQYG…IKQMVSNYDK (247 aa)) are cytoplasmic. Residues 334-407 (YGMSPRHYSS…TKQRQEYKQE (74 aa)) form a disordered region. Residues 352-361 (APPKKRPGKP) show a composition bias toward basic residues. T375 is subject to Phosphothreonine; by CK2; in vitro. At S379 the chain carries Phosphoserine; by CK2; in vitro. The span at 379–389 (SADELEDDSWD) shows a compositional bias: acidic residues. Positions 386–493 (DSWDSEYPPI…IKQMVSNYDK (108 aa)) constitute an OCEL domain. A coiled-coil region spans residues 396–428 (TQTKQRQEYKQEFASDLHEYKRLQAELDELSKI).

This sequence belongs to the ELL/occludin family. As to quaternary structure, interacts in vitro with cingulin, possibly directly. Interacts with ZO-1. In terms of processing, phosphorylated. Localized at tight junctions of both epithelial and endothelial cells.

It localises to the cell membrane. The protein localises to the cell junction. Its subcellular location is the tight junction. Its function is as follows. Probably plays a role in the formation and regulation of the tight junction (TJ) paracellular permeability barrier. The protein is Occludin (ocln) of Xenopus laevis (African clawed frog).